Here is a 918-residue protein sequence, read N- to C-terminus: Protein translocase subunit SecA (918 aa).

Residues Gln87, 105-109 (GEGKT), and Asp494 contribute to the ATP site. Residues 863-883 (KQDDTSPKEYKKIGQEQRAEV) show a composition bias toward basic and acidic residues. The segment at 863 to 918 (KQDDTSPKEYKKIGQEQRAEVDMFGNELKSNKTKPQVSSTTSSGGGSERRSSRRKK) is disordered.

Belongs to the SecA family. As to quaternary structure, monomer and homodimer. Part of the essential Sec protein translocation apparatus which comprises SecA, SecYEG and auxiliary proteins SecDF. Other proteins may also be involved.

Its subcellular location is the cell inner membrane. The protein resides in the cytoplasm. It carries out the reaction ATP + H2O + cellular proteinSide 1 = ADP + phosphate + cellular proteinSide 2.. Its function is as follows. Part of the Sec protein translocase complex. Interacts with the SecYEG preprotein conducting channel. Has a central role in coupling the hydrolysis of ATP to the transfer of proteins into and across the cell membrane, serving as an ATP-driven molecular motor driving the stepwise translocation of polypeptide chains across the membrane. The polypeptide is Protein translocase subunit SecA (Leptospira biflexa serovar Patoc (strain Patoc 1 / Ames)).